Consider the following 462-residue polypeptide: NAD-capped RNA hydrolase NUDT12 (462 aa).

Lysine 10 carries the N6-succinyllysine modification. ANK repeat units follow at residues 11–40 (EMISELHSSAAEGNVAKLAGILSHSPSLLN), 45–74 (NGWTALMYAARNGHPDVVQFLLEKGCDRSL), and 78–98 (ARQTALDIAAFWGYRHIANLL). Lysine 185 bears the N6-succinyllysine mark. Zn(2+) is bound by residues cysteine 284 and cysteine 287. The residue at position 292 (lysine 292) is an N6-succinyllysine. Residues cysteine 302 and cysteine 307 each coordinate Zn(2+). Substrate contacts are provided by residues tyrosine 318, 354-356 (AGF), glutamate 370, glutamate 374, and glutamate 415. Positions 319-453 (PRVDPVVIMQ…SRAIAHQLIK (135 aa)) constitute a Nudix hydrolase domain. Residues alanine 354, glutamate 370, glutamate 374, and glutamate 415 each contribute to the Mg(2+) site. Residues 355–376 (GFIEPGETIEDAVRREVEEESG) carry the Nudix box motif. Residues 460 to 462 (PNL) carry the Microbody targeting signal motif.

It belongs to the Nudix hydrolase family. NudC subfamily. In terms of assembly, homodimer. Homodimerization is essential for its catalytic activity and protein stability. Interacts (via ANK repeats) with BLMH. Mg(2+) is required as a cofactor. Zn(2+) serves as cofactor. In terms of tissue distribution, expressed abundantly in the liver and kidney.

It is found in the cytoplasm. It localises to the peroxisome. Its subcellular location is the cytoplasmic granule. It carries out the reaction a 5'-end NAD(+)-phospho-ribonucleoside in mRNA + H2O = a 5'-end phospho-adenosine-phospho-ribonucleoside in mRNA + beta-nicotinamide D-ribonucleotide + 2 H(+). The enzyme catalyses NAD(+) + H2O = beta-nicotinamide D-ribonucleotide + AMP + 2 H(+). The catalysed reaction is NADH + H2O = reduced beta-nicotinamide D-ribonucleotide + AMP + 2 H(+). It catalyses the reaction NADPH + H2O = reduced beta-nicotinamide D-ribonucleotide + adenosine 2',5'-bisphosphate + 2 H(+). MRNA decapping enzyme that specifically removes the nicotinamide adenine dinucleotide (NAD) cap from a subset of mRNAs by hydrolyzing the diphosphate linkage to produce nicotinamide mononucleotide (NMN) and 5' monophosphate mRNA. The NAD-cap is present at the 5'-end of some RNAs; in contrast to the canonical N7 methylguanosine (m7G) cap, the NAD cap promotes mRNA decay. Preferentially acts on NAD-capped transcripts in response to nutrient stress. Also acts on free nicotinamide adenine dinucleotide molecules: hydrolyzes NAD(H) into NMN(H) and AMP, and NADPH into NMNH and 2',5'-ADP. May act to regulate the concentration of peroxisomal nicotinamide nucleotide cofactors required for oxidative metabolism in this organelle. Regulates the levels of circadian clock components PER1, PER2, PER3 and CRY2 in the liver. In Mus musculus (Mouse), this protein is NAD-capped RNA hydrolase NUDT12.